A 683-amino-acid polypeptide reads, in one-letter code: DNA-directed RNA polymerase subunit beta' (683 aa).

4 residues coordinate Zn(2+): cysteine 69, cysteine 71, cysteine 87, and cysteine 90. Mg(2+)-binding residues include aspartate 492, aspartate 494, and aspartate 496.

The protein belongs to the RNA polymerase beta' chain family. RpoC1 subfamily. In terms of assembly, in plastids the minimal PEP RNA polymerase catalytic core is composed of four subunits: alpha, beta, beta', and beta''. When a (nuclear-encoded) sigma factor is associated with the core the holoenzyme is formed, which can initiate transcription. Requires Mg(2+) as cofactor. It depends on Zn(2+) as a cofactor.

It is found in the plastid. The protein resides in the chloroplast. The enzyme catalyses RNA(n) + a ribonucleoside 5'-triphosphate = RNA(n+1) + diphosphate. Its function is as follows. DNA-dependent RNA polymerase catalyzes the transcription of DNA into RNA using the four ribonucleoside triphosphates as substrates. In Coffea arabica (Arabian coffee), this protein is DNA-directed RNA polymerase subunit beta'.